A 352-amino-acid polypeptide reads, in one-letter code: Large ribosomal subunit protein uL5m (352 aa).

A disordered region spans residues 28–109 (STQTGAGAAA…HPIQSPPSSD (82 aa)). Positions 63 to 80 (EEDKKEFRPWKRAADRKA) are enriched in basic and acidic residues.

It belongs to the universal ribosomal protein uL5 family. As to quaternary structure, component of the mitochondrial large ribosomal subunit (mt-LSU). Mature N.crassa 74S mitochondrial ribosomes consist of a small (37S) and a large (54S) subunit. The 37S small subunit contains a 16S ribosomal RNA (16S mt-rRNA) and 32 different proteins. The 54S large subunit contains a 23S rRNA (23S mt-rRNA) and 42 different proteins. Unlike bacterial L5, uL5m does not bind zinc.

The protein resides in the mitochondrion. In terms of biological role, component of the mitochondrial ribosome (mitoribosome), a dedicated translation machinery responsible for the synthesis of mitochondrial genome-encoded proteins, including at least some of the essential transmembrane subunits of the mitochondrial respiratory chain. The mitoribosomes are attached to the mitochondrial inner membrane and translation products are cotranslationally integrated into the membrane. This chain is Large ribosomal subunit protein uL5m (mrpl7), found in Neurospora crassa (strain ATCC 24698 / 74-OR23-1A / CBS 708.71 / DSM 1257 / FGSC 987).